We begin with the raw amino-acid sequence, 2177 residues long: Protein sidekick-2 (2177 aa).

Positions 1 to 26 (MKGLGVPAAALLWGGLSALLPPSLPA) are cleaved as a signal peptide. Residues 27–1937 (DDVSPYFKTE…ANPFYEEWWF (1911 aa)) lie on the Extracellular side of the membrane. 6 Ig-like C2-type domains span residues 31–113 (PYFK…TEVQ), 118–205 (GSFE…QPIT), 220–299 (PTII…SSVP), 313–401 (PQFV…TYLA), 407–496 (PNIT…ADLV), and 501–590 (TRIT…AHLR). Cys-53 and Cys-96 are disulfide-bonded. N-linked (GlcNAc...) asparagine glycosylation is found at Asn-198 and Asn-228. Intrachain disulfides connect Cys-242/Cys-289 and Cys-335/Cys-385. An N-linked (GlcNAc...) asparagine glycan is attached at Asn-408. 2 cysteine pairs are disulfide-bonded: Cys-428/Cys-480 and Cys-522/Cys-574. Asn-582, Asn-614, Asn-709, Asn-748, Asn-809, Asn-941, and Asn-953 each carry an N-linked (GlcNAc...) asparagine glycan. 13 consecutive Fibronectin type-III domains span residues 597 to 693 (APES…LPEE), 698 to 794 (PPQN…TLQG), 799 to 898 (PPGN…THED), 902 to 996 (PVGH…VPPE), 1000 to 1099 (APTN…TLQA), 1104 to 1202 (APAN…TRES), 1207 to 1304 (GPSN…TLDD), 1305 to 1402 (VPGP…TEKR), 1407 to 1504 (PPSK…TLQA), 1509 to 1626 (APTI…VGEA), 1631 to 1727 (APQN…TQQA), 1731 to 1826 (APGS…TGPG), and 1829 to 1928 (APGP…AQKA). N-linked (GlcNAc...) asparagine glycans are attached at residues Asn-1107, Asn-1210, Asn-1261, Asn-1346, Asn-1462, Asn-1580, Asn-1593, Asn-1675, Asn-1694, Asn-1746, and Asn-1820. A helical transmembrane segment spans residues 1938–1958 (LVVIALVGLIFILLLVFVLII). At 1959–2177 (RGQSKKYAKK…APIGGFSSFV (219 aa)) the chain is on the cytoplasmic side. 2 disordered regions span residues 2044–2071 (AESS…VDPA) and 2103–2177 (QAYS…SSFV). 2 stretches are compositionally biased toward polar residues: residues 2045 to 2063 (ESSS…QGSD) and 2119 to 2130 (PLSNSTSTQQGS). The span at 2142-2151 (PQTPGNPPSQ) shows a compositional bias: pro residues. The short motif at 2171-2177 (GGFSSFV) is the PDZ-binding element.

This sequence belongs to the sidekick family. As to quaternary structure, homodimer; mediates homophilic interactions to promote cell adhesion. In terms of tissue distribution, expressed by non-overlapping subsets of retinal neurons. SDK1, SDK2, DSCAM and DSCAML1 are expressed in non-overlapping subsets of interneurons and retinal ganglion cells (RGCs) that form synapses in distinct inner plexiform layer (IPL) sublaminae.

The protein resides in the cell membrane. The protein localises to the synapse. Functionally, adhesion molecule that promotes lamina-specific synaptic connections in the retina. Expressed in specific subsets of interneurons and retinal ganglion cells (RGCs) and promotes synaptic connectivity via homophilic interactions. The sequence is that of Protein sidekick-2 from Gallus gallus (Chicken).